We begin with the raw amino-acid sequence, 301 residues long: UDP-3-O-acyl-N-acetylglucosamine deacetylase (301 aa).

Residues histidine 75, histidine 233, and aspartate 237 each coordinate Zn(2+). Catalysis depends on histidine 260, which acts as the Proton donor.

This sequence belongs to the LpxC family. Requires Zn(2+) as cofactor.

The enzyme catalyses a UDP-3-O-[(3R)-3-hydroxyacyl]-N-acetyl-alpha-D-glucosamine + H2O = a UDP-3-O-[(3R)-3-hydroxyacyl]-alpha-D-glucosamine + acetate. It functions in the pathway glycolipid biosynthesis; lipid IV(A) biosynthesis; lipid IV(A) from (3R)-3-hydroxytetradecanoyl-[acyl-carrier-protein] and UDP-N-acetyl-alpha-D-glucosamine: step 2/6. Functionally, catalyzes the hydrolysis of UDP-3-O-myristoyl-N-acetylglucosamine to form UDP-3-O-myristoylglucosamine and acetate, the committed step in lipid A biosynthesis. This is UDP-3-O-acyl-N-acetylglucosamine deacetylase from Aliarcobacter butzleri (strain RM4018) (Arcobacter butzleri).